Consider the following 574-residue polypeptide: Septation ring formation regulator EzrA (574 aa).

The Extracellular portion of the chain corresponds to 1–7 (MSSGIIL). Residues 8–26 (LIVAIVLLVIIAYLVGVII) traverse the membrane as a helical segment. Residues 27–574 (RKRNDSLITS…YEKTREHIRF (548 aa)) are Cytoplasmic-facing. Coiled-coil stretches lie at residues 102–141 (NFIR…EEKN), 274–350 (ELVT…ETES), and 459–520 (QLEA…SFEA).

The protein belongs to the EzrA family.

It localises to the cell membrane. Negative regulator of FtsZ ring formation; modulates the frequency and position of FtsZ ring formation. Inhibits FtsZ ring formation at polar sites. Interacts either with FtsZ or with one of its binding partners to promote depolymerization. This Streptococcus pyogenes serotype M4 (strain MGAS10750) protein is Septation ring formation regulator EzrA.